The chain runs to 175 residues: Peptide methionine sulfoxide reductase MsrA (175 aa).

Residue Cys10 is part of the active site.

Belongs to the MsrA Met sulfoxide reductase family.

It carries out the reaction L-methionyl-[protein] + [thioredoxin]-disulfide + H2O = L-methionyl-(S)-S-oxide-[protein] + [thioredoxin]-dithiol. The enzyme catalyses [thioredoxin]-disulfide + L-methionine + H2O = L-methionine (S)-S-oxide + [thioredoxin]-dithiol. In terms of biological role, has an important function as a repair enzyme for proteins that have been inactivated by oxidation. Catalyzes the reversible oxidation-reduction of methionine sulfoxide in proteins to methionine. The sequence is that of Peptide methionine sulfoxide reductase MsrA from Clavibacter michiganensis subsp. michiganensis (strain NCPPB 382).